Reading from the N-terminus, the 214-residue chain is Charged multivesicular body protein 2b (214 aa).

Residues Gln25–Lys55 are a coiled coil. The segment at Ala179 to Asp201 is disordered. The segment covering Ser190–Ile199 has biased composition (polar residues). An MIT-interacting motif motif is present at residues Glu202–Gly212.

This sequence belongs to the SNF7 family. As to quaternary structure, probable core component of the endosomal sorting required for transport complex III (ESCRT-III). ESCRT-III components are thought to multimerize to form a flat lattice on the perimeter membrane of the endosome.

The protein resides in the cytoplasm. Its subcellular location is the cytosol. It localises to the late endosome membrane. Functionally, probable core component of the endosomal sorting required for transport complex III (ESCRT-III) which is involved in multivesicular bodies (MVBs) formation and sorting of endosomal cargo proteins into MVBs. MVBs contain intraluminal vesicles (ILVs) that are generated by invagination and scission from the limiting membrane of the endosome and mostly are delivered to lysosomes enabling degradation of membrane proteins, such as stimulated growth factor receptors, lysosomal enzymes and lipids. In Gallus gallus (Chicken), this protein is Charged multivesicular body protein 2b (CHMP2B).